The sequence spans 261 residues: Cytochrome c oxidase subunit 3 (261 aa).

Residues 1 to 15 are Mitochondrial matrix-facing; it reads MTHQTHAYHMVNPSP. A helical transmembrane segment spans residues 16–34; sequence WPLTGALSALLMTSGLIMW. Over 35-40 the chain is Mitochondrial intermembrane; sequence FHFNST. A helical membrane pass occupies residues 41-66; sequence ALLMLGLTTNMLTMYQWWRDIIREST. At 67–72 the chain is on the mitochondrial matrix side; it reads FQGHHT. A helical membrane pass occupies residues 73-105; that stretch reads PVVQKGLRYGMILFIISEVLFFTGFFWAFYHSS. Over 106–128 the chain is Mitochondrial intermembrane; sequence LAPTPELGGCWPPTGINPLNPLE. Residues 129–152 traverse the membrane as a helical segment; that stretch reads VPLLNTSVLLASGVSITWAHHSLM. Residues 153-155 are Mitochondrial matrix-facing; it reads EGN. Residues 156–183 form a helical membrane-spanning segment; that stretch reads RSHMLQALFITITLGVYFTLLQASEYYE. Residues 184-190 lie on the Mitochondrial intermembrane side of the membrane; the sequence is APFTISD. Residues 191–223 traverse the membrane as a helical segment; that stretch reads GVYGSTFFVATGFHGLHVIIGSTFLIVCFFRQL. Residues 224 to 232 are Mitochondrial matrix-facing; the sequence is KFHFTSNHH. Residues 233–256 form a helical membrane-spanning segment; sequence FGFEAAAWYWHFVDVVWLFLYVSI. Residues 257–261 are Mitochondrial intermembrane-facing; sequence YWWGS.

Belongs to the cytochrome c oxidase subunit 3 family. As to quaternary structure, component of the cytochrome c oxidase (complex IV, CIV), a multisubunit enzyme composed of 14 subunits. The complex is composed of a catalytic core of 3 subunits MT-CO1, MT-CO2 and MT-CO3, encoded in the mitochondrial DNA, and 11 supernumerary subunits COX4I, COX5A, COX5B, COX6A, COX6B, COX6C, COX7A, COX7B, COX7C, COX8 and NDUFA4, which are encoded in the nuclear genome. The complex exists as a monomer or a dimer and forms supercomplexes (SCs) in the inner mitochondrial membrane with NADH-ubiquinone oxidoreductase (complex I, CI) and ubiquinol-cytochrome c oxidoreductase (cytochrome b-c1 complex, complex III, CIII), resulting in different assemblies (supercomplex SCI(1)III(2)IV(1) and megacomplex MCI(2)III(2)IV(2)).

Its subcellular location is the mitochondrion inner membrane. The catalysed reaction is 4 Fe(II)-[cytochrome c] + O2 + 8 H(+)(in) = 4 Fe(III)-[cytochrome c] + 2 H2O + 4 H(+)(out). Component of the cytochrome c oxidase, the last enzyme in the mitochondrial electron transport chain which drives oxidative phosphorylation. The respiratory chain contains 3 multisubunit complexes succinate dehydrogenase (complex II, CII), ubiquinol-cytochrome c oxidoreductase (cytochrome b-c1 complex, complex III, CIII) and cytochrome c oxidase (complex IV, CIV), that cooperate to transfer electrons derived from NADH and succinate to molecular oxygen, creating an electrochemical gradient over the inner membrane that drives transmembrane transport and the ATP synthase. Cytochrome c oxidase is the component of the respiratory chain that catalyzes the reduction of oxygen to water. Electrons originating from reduced cytochrome c in the intermembrane space (IMS) are transferred via the dinuclear copper A center (CU(A)) of subunit 2 and heme A of subunit 1 to the active site in subunit 1, a binuclear center (BNC) formed by heme A3 and copper B (CU(B)). The BNC reduces molecular oxygen to 2 water molecules using 4 electrons from cytochrome c in the IMS and 4 protons from the mitochondrial matrix. In Syncerus caffer (African buffalo), this protein is Cytochrome c oxidase subunit 3 (MT-CO3).